Here is a 110-residue protein sequence, read N- to C-terminus: Large ribosomal subunit protein eL34 (110 aa).

A disordered region spans residues 1–41 (MKNVLIHKGATYKTRSNRRRKVRTPSGKLVNRRVKKHSKKH). A compositionally biased stretch (basic residues) spans 30-41 (VNRRVKKHSKKH).

It belongs to the eukaryotic ribosomal protein eL34 family.

The sequence is that of Large ribosomal subunit protein eL34 (RPL34) from Encephalitozoon cuniculi (strain GB-M1) (Microsporidian parasite).